Consider the following 301-residue polypeptide: Probable alpha-L-glutamate ligase 2 (301 aa).

Positions 104-287 (LQLLSRKGIG…VTEPIVEYIE (184 aa)) constitute an ATP-grasp domain. ATP is bound by residues K141, 178–179 (EY), D187, and 211–213 (RSN). Residues D248, E260, and N262 each contribute to the Mg(2+) site. Mn(2+) contacts are provided by D248, E260, and N262.

Belongs to the RimK family. Mg(2+) is required as a cofactor. The cofactor is Mn(2+).

This chain is Probable alpha-L-glutamate ligase 2, found in Shewanella baltica (strain OS195).